Consider the following 692-residue polypeptide: Methionine--tRNA ligase (692 aa).

The 'HIGH' region signature appears at Pro-15 to His-25. Cys-146, Cys-149, Cys-159, and Cys-162 together coordinate Zn(2+). A 'KMSKS' region motif is present at residues Lys-332 to Ser-336. Lys-335 contacts ATP. The interval Thr-552 to Pro-577 is disordered. Positions Ala-556–Glu-566 are enriched in basic and acidic residues. Residues Asp-591–Lys-692 enclose the tRNA-binding domain.

The protein belongs to the class-I aminoacyl-tRNA synthetase family. MetG type 1 subfamily. In terms of assembly, homodimer. Zn(2+) is required as a cofactor.

It localises to the cytoplasm. It catalyses the reaction tRNA(Met) + L-methionine + ATP = L-methionyl-tRNA(Met) + AMP + diphosphate. Functionally, is required not only for elongation of protein synthesis but also for the initiation of all mRNA translation through initiator tRNA(fMet) aminoacylation. The sequence is that of Methionine--tRNA ligase from Shewanella sediminis (strain HAW-EB3).